A 323-amino-acid chain; its full sequence is Low affinity immunoglobulin gamma Fc region receptor II-c (323 aa).

Residues 1 to 42 form the signal peptide; sequence MGILSFLPVLATESDWADCKSPQPWGHMLLWTAVLFLAPVAG. Residues 43 to 223 are Extracellular-facing; it reads TPAAPPKAVL…VQAPSSSPMG (181 aa). 2 Ig-like C2-type domains span residues 48 to 127 and 131 to 213; these read PKAV…VHLT and EWLV…VTIT. Disulfide bonds link cysteine 71–cysteine 113 and cysteine 152–cysteine 196. Residues asparagine 106, asparagine 180, and asparagine 187 are each glycosylated (N-linked (GlcNAc...) asparagine). Residues 224 to 246 form a helical membrane-spanning segment; the sequence is IIVAVVTGIAVAAIVAAVVALIY. At 247–323 the chain is on the cytoplasmic side; it reads CRKKRISANS…PPNDHVNSNN (77 aa). Residues 277 to 323 are disordered; that stretch reads KRQPEETNNDYETADGGYMTLNPRAPTDDDKNIYLTLPPNDHVNSNN. Phosphotyrosine; by SRC-type Tyr-kinases occurs at positions 294 and 310.

Post-translationally, phosphorylated by SRC-type Tyr-kinases such as LYN, BLK, FYN and SYK. In terms of tissue distribution, isoform IIC1 is detected in monocytes, macrophages, polymorphonuclear cells and natural killer cells.

It is found in the cytoplasm. The protein localises to the cell membrane. Functionally, receptor for the Fc region of complexed immunoglobulins gamma. Low affinity receptor. Involved in a variety of effector and regulatory functions such as phagocytosis of immune complexes and modulation of antibody production by B-cells. The chain is Low affinity immunoglobulin gamma Fc region receptor II-c (FCGR2C) from Homo sapiens (Human).